Reading from the N-terminus, the 87-residue chain is Small ribosomal subunit protein uS15 (87 aa).

This sequence belongs to the universal ribosomal protein uS15 family. As to quaternary structure, part of the 30S ribosomal subunit. Forms a bridge to the 50S subunit in the 70S ribosome, contacting the 23S rRNA.

One of the primary rRNA binding proteins, it binds directly to 16S rRNA where it helps nucleate assembly of the platform of the 30S subunit by binding and bridging several RNA helices of the 16S rRNA. Functionally, forms an intersubunit bridge (bridge B4) with the 23S rRNA of the 50S subunit in the ribosome. This Cutibacterium acnes (strain DSM 16379 / KPA171202) (Propionibacterium acnes) protein is Small ribosomal subunit protein uS15.